Consider the following 154-residue polypeptide: Aspartate carbamoyltransferase regulatory chain (154 aa).

Cys109, Cys114, Cys138, and Cys141 together coordinate Zn(2+).

Belongs to the PyrI family. Contains catalytic and regulatory chains. The cofactor is Zn(2+).

Functionally, involved in allosteric regulation of aspartate carbamoyltransferase. This Methanothrix thermoacetophila (strain DSM 6194 / JCM 14653 / NBRC 101360 / PT) (Methanosaeta thermophila) protein is Aspartate carbamoyltransferase regulatory chain.